An 810-amino-acid chain; its full sequence is Plasminogen (810 aa).

Residues 1–19 form the signal peptide; it reads MEHKEVVLLLLLFLKSGQG. Positions 20–98 constitute a PAN domain; the sequence is EPLDDYVNTQ…RDVVLFEKKV (79 aa). Intrachain disulfides connect Cys49-Cys73, Cys53-Cys61, Cys103-Cys181, Cys124-Cys164, Cys152-Cys176, Cys185-Cys262, Cys188-Cys316, Cys206-Cys245, Cys234-Cys257, Cys275-Cys352, Cys296-Cys335, and Cys324-Cys347. 3 consecutive Kringle domains span residues 103–181, 184–262, and 275–352; these read CKTG…IPEC, ACMH…IPRC, and CLKG…IPSC. The disordered stretch occupies residues 126-145; that stretch reads KWSSTSPHRPRFSPATHPSE. The L-lysine site is built by Arg136, Asp158, and Arg172. O-linked (GalNAc...) threonine glycosylation is present at Thr365. 9 disulfides stabilise this stretch: Cys377-Cys454, Cys398-Cys437, Cys426-Cys449, Cys481-Cys560, Cys502-Cys543, Cys531-Cys555, Cys567-Cys685, Cys577-Cys585, and Cys607-Cys623. Kringle domains are found at residues 377–454 and 481–560; these read CYHG…LKKC and CMFG…VPQC. L-lysine contacts are provided by Asp432 and Arg445. A Peptidase S1 domain is found at 581–808; sequence VVGGCVANAH…FVTWIEGVMR (228 aa). Ser597 carries the post-translational modification Phosphoserine. Active-site charge relay system residues include His622 and Asp665. Ser688 carries the phosphoserine modification. 3 cysteine pairs are disulfide-bonded: Cys699–Cys766, Cys729–Cys745, and Cys756–Cys784. The active-site Charge relay system is Ser760.

This sequence belongs to the peptidase S1 family. Plasminogen subfamily. Interacts with CSPG4 and AMOT. Interacts (via the Kringle domains) with HRG; the interaction tethers PLG to the cell surface and enhances its activation. Interacts (via Kringle 4 domain) with ADA; the interaction stimulates PLG activation when in complex with DPP4. Angiostatin: Interacts with ATP5F1A; the interaction inhibits most of the angiogenic effects of angiostatin. In the presence of the inhibitor, the activation involves only cleavage after Arg-580, yielding two chains held together by two disulfide bonds. In the absence of the inhibitor, the activation involves additionally the removal of the activation peptide.

It localises to the secreted. It carries out the reaction Preferential cleavage: Lys-|-Xaa &gt; Arg-|-Xaa, higher selectivity than trypsin. Converts fibrin into soluble products.. With respect to regulation, converted into plasmin by plasminogen activators, both plasminogen and its activator being bound to fibrin. Activated with catalytic amounts of streptokinase. Its function is as follows. Plasmin dissolves the fibrin of blood clots and acts as a proteolytic factor in a variety of other processes including embryonic development, tissue remodeling, tumor invasion, and inflammation. In ovulation, weakens the walls of the Graafian follicle. It activates the urokinase-type plasminogen activator, collagenases and several complement zymogens, such as C1, C4 and C5. Cleavage of fibronectin and laminin leads to cell detachment and apoptosis. Also cleaves fibrin, thrombospondin and von Willebrand factor. Its role in tissue remodeling and tumor invasion may be modulated by CSPG4. Binds to cells. The protein is Plasminogen (PLG) of Pongo abelii (Sumatran orangutan).